Consider the following 629-residue polypeptide: 1-deoxy-D-xylulose-5-phosphate synthase (629 aa).

Thiamine diphosphate contacts are provided by residues His72 and Gly113–Ala115. Asp144 is a binding site for Mg(2+). Thiamine diphosphate-binding positions include Gly145–Ala146, Asn174, Tyr287, and Glu370. Asn174 provides a ligand contact to Mg(2+).

The protein belongs to the transketolase family. DXPS subfamily. As to quaternary structure, homodimer. The cofactor is Mg(2+). Thiamine diphosphate is required as a cofactor.

It catalyses the reaction D-glyceraldehyde 3-phosphate + pyruvate + H(+) = 1-deoxy-D-xylulose 5-phosphate + CO2. It functions in the pathway metabolic intermediate biosynthesis; 1-deoxy-D-xylulose 5-phosphate biosynthesis; 1-deoxy-D-xylulose 5-phosphate from D-glyceraldehyde 3-phosphate and pyruvate: step 1/1. Catalyzes the acyloin condensation reaction between C atoms 2 and 3 of pyruvate and glyceraldehyde 3-phosphate to yield 1-deoxy-D-xylulose-5-phosphate (DXP). This chain is 1-deoxy-D-xylulose-5-phosphate synthase, found in Prochlorococcus marinus (strain MIT 9301).